Consider the following 116-residue polypeptide: Ribonuclease P protein component (116 aa).

This sequence belongs to the RnpA family. As to quaternary structure, consists of a catalytic RNA component (M1 or rnpB) and a protein subunit.

The catalysed reaction is Endonucleolytic cleavage of RNA, removing 5'-extranucleotides from tRNA precursor.. In terms of biological role, RNaseP catalyzes the removal of the 5'-leader sequence from pre-tRNA to produce the mature 5'-terminus. It can also cleave other RNA substrates such as 4.5S RNA. The protein component plays an auxiliary but essential role in vivo by binding to the 5'-leader sequence and broadening the substrate specificity of the ribozyme. This Carboxydothermus hydrogenoformans (strain ATCC BAA-161 / DSM 6008 / Z-2901) protein is Ribonuclease P protein component.